Consider the following 382-residue polypeptide: UDP-4-amino-4-deoxy-L-arabinose--oxoglutarate aminotransferase (382 aa).

Position 183 is an N6-(pyridoxal phosphate)lysine (K183).

The protein belongs to the DegT/DnrJ/EryC1 family. ArnB subfamily. Homodimer. It depends on pyridoxal 5'-phosphate as a cofactor.

It catalyses the reaction UDP-4-amino-4-deoxy-beta-L-arabinose + 2-oxoglutarate = UDP-beta-L-threo-pentopyranos-4-ulose + L-glutamate. It functions in the pathway nucleotide-sugar biosynthesis; UDP-4-deoxy-4-formamido-beta-L-arabinose biosynthesis; UDP-4-deoxy-4-formamido-beta-L-arabinose from UDP-alpha-D-glucuronate: step 2/3. It participates in bacterial outer membrane biogenesis; lipopolysaccharide biosynthesis. Functionally, catalyzes the conversion of UDP-4-keto-arabinose (UDP-Ara4O) to UDP-4-amino-4-deoxy-L-arabinose (UDP-L-Ara4N). The modified arabinose is attached to lipid A and is required for resistance to polymyxin and cationic antimicrobial peptides. This Pseudomonas aeruginosa (strain UCBPP-PA14) protein is UDP-4-amino-4-deoxy-L-arabinose--oxoglutarate aminotransferase.